The primary structure comprises 246 residues: Sec-independent protein translocase protein TatB (246 aa).

Residues 1 to 21 form a helical membrane-spanning segment; the sequence is MFDIGWSELLVIAVVLIVVVG. 3 disordered regions span residues 94–122, 179–204, and 225–246; these read SDLQ…APLV, SRSK…PKPT, and VADA…KDEA. Composition is skewed to polar residues over residues 97 to 112 and 187 to 197; these read QKAT…TAAP and PETTVATNASE.

This sequence belongs to the TatB family. In terms of assembly, the Tat system comprises two distinct complexes: a TatABC complex, containing multiple copies of TatA, TatB and TatC subunits, and a separate TatA complex, containing only TatA subunits. Substrates initially bind to the TatABC complex, which probably triggers association of the separate TatA complex to form the active translocon.

The protein resides in the cell inner membrane. Part of the twin-arginine translocation (Tat) system that transports large folded proteins containing a characteristic twin-arginine motif in their signal peptide across membranes. Together with TatC, TatB is part of a receptor directly interacting with Tat signal peptides. TatB may form an oligomeric binding site that transiently accommodates folded Tat precursor proteins before their translocation. This is Sec-independent protein translocase protein TatB from Agrobacterium fabrum (strain C58 / ATCC 33970) (Agrobacterium tumefaciens (strain C58)).